The primary structure comprises 634 residues: Probable LRR receptor-like serine/threonine-protein kinase At2g23950 (634 aa).

Residues 1-27 (MVVMKLITMKIFSVLLLLCFFVTCSLS) form the signal peptide. The Extracellular portion of the chain corresponds to 28 to 236 (SEPRNPEVEA…SSGRRTNILA (209 aa)). Asn-96 and Asn-109 each carry an N-linked (GlcNAc...) asparagine glycan. LRR repeat units follow at residues 99 to 121 (NLRQ…ICSL), 123 to 145 (KLQT…VNQL), 147 to 167 (NLQY…ASLS), and 171 to 193 (HLSF…PART). Residue Asn-155 is glycosylated (N-linked (GlcNAc...) asparagine). The helical transmembrane segment at 237–257 (VALGVSLGFAVSVILSLGFIW) threads the bilayer. Topologically, residues 258 to 634 (YRKKQRRLTM…SFAMELSGPR (377 aa)) are cytoplasmic. Phosphothreonine is present on Thr-296. A Protein kinase domain is found at 299 to 554 (FSSKSILGAG…QVALLCTQFL (256 aa)). Position 305–313 (305–313 (LGAGGFGNV)) interacts with ATP. The residue at position 322 (Thr-322) is a Phosphothreonine. Lys-327 lines the ATP pocket. Ser-380 and Ser-383 each carry phosphoserine. Thr-395 is subject to Phosphothreonine. The active-site Proton acceptor is the Asp-422. Thr-455, Thr-456, and Thr-461 each carry phosphothreonine. Tyr-469 carries the post-translational modification Phosphotyrosine. Phosphoserine is present on Ser-471. Thr-472 bears the Phosphothreonine mark. Residue Ser-476 is modified to Phosphoserine. Residue Thr-551 is modified to Phosphothreonine.

It belongs to the protein kinase superfamily. Ser/Thr protein kinase family.

Its subcellular location is the membrane. The enzyme catalyses L-seryl-[protein] + ATP = O-phospho-L-seryl-[protein] + ADP + H(+). It catalyses the reaction L-threonyl-[protein] + ATP = O-phospho-L-threonyl-[protein] + ADP + H(+). The sequence is that of Probable LRR receptor-like serine/threonine-protein kinase At2g23950 from Arabidopsis thaliana (Mouse-ear cress).